We begin with the raw amino-acid sequence, 312 residues long: Ribosomal RNA small subunit methyltransferase H (312 aa).

S-adenosyl-L-methionine is bound by residues 35-37 (GGH), aspartate 55, phenylalanine 80, aspartate 102, and glutamine 109.

Belongs to the methyltransferase superfamily. RsmH family.

It localises to the cytoplasm. The enzyme catalyses cytidine(1402) in 16S rRNA + S-adenosyl-L-methionine = N(4)-methylcytidine(1402) in 16S rRNA + S-adenosyl-L-homocysteine + H(+). Functionally, specifically methylates the N4 position of cytidine in position 1402 (C1402) of 16S rRNA. This Pseudoalteromonas translucida (strain TAC 125) protein is Ribosomal RNA small subunit methyltransferase H.